A 448-amino-acid polypeptide reads, in one-letter code: UDP-N-acetylmuramoylalanine--D-glutamate ligase (448 aa).

116–122 (GSNAKST) contacts ATP.

It belongs to the MurCDEF family.

The protein resides in the cytoplasm. It carries out the reaction UDP-N-acetyl-alpha-D-muramoyl-L-alanine + D-glutamate + ATP = UDP-N-acetyl-alpha-D-muramoyl-L-alanyl-D-glutamate + ADP + phosphate + H(+). It participates in cell wall biogenesis; peptidoglycan biosynthesis. Its function is as follows. Cell wall formation. Catalyzes the addition of glutamate to the nucleotide precursor UDP-N-acetylmuramoyl-L-alanine (UMA). This is UDP-N-acetylmuramoylalanine--D-glutamate ligase from Pseudomonas savastanoi pv. phaseolicola (strain 1448A / Race 6) (Pseudomonas syringae pv. phaseolicola (strain 1448A / Race 6)).